Here is a 161-residue protein sequence, read N- to C-terminus: Cyclic pyranopterin monophosphate synthase (161 aa).

Substrate is bound by residues 75-77 and 114-115; these read MCH and ME. Asp129 is an active-site residue.

This sequence belongs to the MoaC family. In terms of assembly, homohexamer; trimer of dimers.

The catalysed reaction is (8S)-3',8-cyclo-7,8-dihydroguanosine 5'-triphosphate = cyclic pyranopterin phosphate + diphosphate. The protein operates within cofactor biosynthesis; molybdopterin biosynthesis. Functionally, catalyzes the conversion of (8S)-3',8-cyclo-7,8-dihydroguanosine 5'-triphosphate to cyclic pyranopterin monophosphate (cPMP). The protein is Cyclic pyranopterin monophosphate synthase of Staphylococcus carnosus (strain TM300).